The sequence spans 462 residues: Fumarate hydratase class II (462 aa).

Substrate contacts are provided by residues 97–99, 127–130, 137–139, and Thr-185; these read SGT, HPND, and SSN. His-186 acts as the Proton donor/acceptor in catalysis. The active site involves Ser-316. Substrate contacts are provided by residues Ser-317 and 322–324; that span reads KVN.

This sequence belongs to the class-II fumarase/aspartase family. Fumarase subfamily. In terms of assembly, homotetramer.

Its subcellular location is the cytoplasm. It catalyses the reaction (S)-malate = fumarate + H2O. It functions in the pathway carbohydrate metabolism; tricarboxylic acid cycle; (S)-malate from fumarate: step 1/1. Functionally, involved in the TCA cycle. Catalyzes the stereospecific interconversion of fumarate to L-malate. In Bacillus subtilis (strain 168), this protein is Fumarate hydratase class II.